We begin with the raw amino-acid sequence, 623 residues long: Glutathione import ATP-binding protein GsiA (623 aa).

2 ABC transporter domains span residues 15–269 (VENL…RALL) and 314–564 (LRVR…RKLL). ATP-binding positions include 49–56 (GESGSGKS) and 357–364 (GESGSGKS).

It belongs to the ABC transporter superfamily. Glutathione importer (TC 3.A.1.5.11) family. The complex is composed of two ATP-binding proteins (GsiA), two transmembrane proteins (GsiC and GsiD) and a solute-binding protein (GsiB).

Its subcellular location is the cell inner membrane. It carries out the reaction glutathione(out) + ATP + H2O = glutathione(in) + ADP + phosphate + H(+). In terms of biological role, part of the ABC transporter complex GsiABCD involved in glutathione import. Responsible for energy coupling to the transport system. In Shigella flexneri serotype 5b (strain 8401), this protein is Glutathione import ATP-binding protein GsiA.